The sequence spans 166 residues: Small ribosomal subunit protein uS5 (166 aa).

Residues 11-74 (LIDKVVHISR…ESAKRTMFEV (64 aa)) form the S5 DRBM domain.

The protein belongs to the universal ribosomal protein uS5 family. In terms of assembly, part of the 30S ribosomal subunit. Contacts proteins S4 and S8.

In terms of biological role, with S4 and S12 plays an important role in translational accuracy. Functionally, located at the back of the 30S subunit body where it stabilizes the conformation of the head with respect to the body. This Syntrophobacter fumaroxidans (strain DSM 10017 / MPOB) protein is Small ribosomal subunit protein uS5.